A 676-amino-acid polypeptide reads, in one-letter code: MATSQRKILVTSALPYANGPIHLGHMLEYIQTDIWSRYQKLRGHECHYICADDAHGTPIMLKAQQLGMAPEEMIAQVNKEHQQDFADFNIAFDNYHSTHSEENRVLASDIYLKLRANGYIKSKSISQLFDPEKSMFLPDRFVKGTCPKCKSPDQYGDNCDACGATYSPTELINPKSAVSGATPVMKDTEHFFFDLPAFEDMLKEWTRSGALQTEMANKLDEWFEQGLQQWDITRDAPYFGFEIPDAPGKYFYVWLDAPIGYMGSFKNLCDKRPELSFDEFWAKDSKAEVYHFIGKDIVYFHSLFWPAMLHGSGYRQPNSVYAHGYVTVNGAKMSKSKGTFIKARTYLDHLDPEYLRYYYAAKLSSRIDDLDLNLEDFAQRVNSDLVGKLVNLASRTAGFITKRFDGKLAKIADTTLTDAFLAKQEQIAEFYETREYGKAMREIMALADIANGFVADAAPWQLVKQDDQQEAAHQVCSNALNLFRILVTYLKPVLPRLALDVEAFFQQTLTWDSLGQDMAGHEIAPFKAMMQRVELDKVNAMVADSKENLQATSEPEAPKGPLASDPISDTINYEDFAKIDLRIARIVKAEHVAEADKLLKLQLDIGGETRQVFAGIKSAYSPEDLEGKLTVMVANLAPRKMRFGMSEGMVLAAGPGGSDLWILEPHEGAQPGMRVK.

A 'HIGH' region motif is present at residues 15–25 (PYANGPIHLGH). Positions 146, 149, 159, and 162 each coordinate Zn(2+). Residues 332 to 336 (KMSKS) carry the 'KMSKS' region motif. Position 335 (lysine 335) interacts with ATP. In terms of domain architecture, tRNA-binding spans 575-676 (DFAKIDLRIA…EGAQPGMRVK (102 aa)).

This sequence belongs to the class-I aminoacyl-tRNA synthetase family. MetG type 1 subfamily. In terms of assembly, homodimer. The cofactor is Zn(2+).

The protein localises to the cytoplasm. The enzyme catalyses tRNA(Met) + L-methionine + ATP = L-methionyl-tRNA(Met) + AMP + diphosphate. In terms of biological role, is required not only for elongation of protein synthesis but also for the initiation of all mRNA translation through initiator tRNA(fMet) aminoacylation. This is Methionine--tRNA ligase from Shewanella sp. (strain MR-7).